We begin with the raw amino-acid sequence, 336 residues long: Aspartate--ammonia ligase (336 aa).

Belongs to the class-II aminoacyl-tRNA synthetase family. AsnA subfamily.

It is found in the cytoplasm. The enzyme catalyses L-aspartate + NH4(+) + ATP = L-asparagine + AMP + diphosphate + H(+). It functions in the pathway amino-acid biosynthesis; L-asparagine biosynthesis; L-asparagine from L-aspartate (ammonia route): step 1/1. This is Aspartate--ammonia ligase from Lactobacillus acidophilus (strain ATCC 700396 / NCK56 / N2 / NCFM).